Reading from the N-terminus, the 430-residue chain is Nucleoporin NUP42 (430 aa).

The disordered stretch occupies residues 1-68 (MSAFGNPFTS…AFGMPQFGTN (68 aa)). The SXFG 1 repeat unit spans residues 2 to 5 (SAFG). The span at 15 to 36 (NLSNTSGINPFTNNAASTNNMG) shows a compositional bias: polar residues. SAFGXPXFG repeat units follow at residues 38–46 (SAFGRPSFG) and 58–66 (SAFGMPQFG). Residues 45–68 (FGTANTMTGGTTTSAFGMPQFGTN) are compositionally biased toward low complexity. The stretch at 78-81 (SAFG) is one SXFG 2 repeat. SAFGXPXFG repeat units lie at residues 90-98 (SAFGAPAFG) and 112-120 (SAFGAPSFG). Positions 121–230 (STGFGAMAAT…QNTSTSSGTG (110 aa)) are interactions with CRM1 and GFD1. FG repeat units follow at residues 124-125 (FG) and 134-135 (FG). The residue at position 137 (Ser137) is a Phosphoserine. The stretch at 143 to 151 (SAFGQPAFG) is one SAFGXPXFG 5 repeat. 2 SXFG repeats span residues 168-171 (SAFG) and 182-185 (SPFG). The segment at 180–294 (TTSPFGSLQQ…QSPFSGGSGG (115 aa)) is disordered. Residues 186-201 (SLQQNASQNASSTSSA) show a composition bias toward low complexity. One copy of the SAFGXPXFG 6 repeat lies at 200–208 (SAFGKPTFG). Residues 209-230 (AATNTQSPFGTIQNTSTSSGTG) show a composition bias toward polar residues. SXFG repeat units lie at residues 215–218 (SPFG) and 232–235 (SPFG). 2 stretches are compositionally biased toward polar residues: residues 237 to 252 (FGTN…NLQS) and 260 to 285 (PFGT…TNNQ). SXFG repeat units lie at residues 259-262 (SPFG) and 277-280 (SAFG). An FG 3 repeat occupies 296 to 297 (FG). At Ser298 the chain carries Phosphoserine. The SXFG 9 repeat unit spans residues 312-315 (SSFG). 3 FG repeats span residues 319–322 (FSFG), 339–340 (FG), and 361–364 (FGFG). The disordered stretch occupies residues 319-346 (FSFGITPQNDANKVSQSNPSFGQTMPNT). The span at 323 to 346 (ITPQNDANKVSQSNPSFGQTMPNT) shows a compositional bias: polar residues. The tract at residues 365–430 (QQQMNATNVN…DIPPPPALVA (66 aa)) is interaction with GLE1.

Component of the nuclear pore complex (NPC). NPC constitutes the exclusive means of nucleocytoplasmic transport. NPCs allow the passive diffusion of ions and small molecules and the active, nuclear transport receptor-mediated bidirectional transport of macromolecules such as proteins, RNAs, ribonucleoparticles (RNPs), and ribosomal subunits across the nuclear envelope. Due to its 8-fold rotational symmetry, all subunits are present with 8 copies or multiples thereof. NUP42 interacts with the NUP82 subcomplex. It interacts directly with GLE1, and through its FG repeats with GFD1, the heterodimeric mRNA transport factor MEX67/MTR2, and the karyopherin CRM1.

Its subcellular location is the nucleus. The protein localises to the nuclear pore complex. The protein resides in the nucleus membrane. Its function is as follows. Functions as a component of the nuclear pore complex (NPC). NPC components, collectively referred to as nucleoporins (NUPs), can play the role of both NPC structural components and of docking or interaction partners for transiently associated nuclear transport factors. Active directional transport is assured by both, a Phe-Gly (FG) repeat affinity gradient for these transport factors across the NPC and a transport cofactor concentration gradient across the nuclear envelope (GSP1 and GSP2 GTPases associated predominantly with GTP in the nucleus, with GDP in the cytoplasm). NUP42 is specifically important for nuclear protein and mRNA export. In Saccharomyces cerevisiae (strain ATCC 204508 / S288c) (Baker's yeast), this protein is Nucleoporin NUP42 (NUP42).